We begin with the raw amino-acid sequence, 177 residues long: Large ribosomal subunit protein uL6 (177 aa).

Position 44 is an N6-acetyllysine (Lys-44).

Belongs to the universal ribosomal protein uL6 family. Part of the 50S ribosomal subunit.

Functionally, this protein binds to the 23S rRNA, and is important in its secondary structure. It is located near the subunit interface in the base of the L7/L12 stalk, and near the tRNA binding site of the peptidyltransferase center. The sequence is that of Large ribosomal subunit protein uL6 from Escherichia fergusonii (strain ATCC 35469 / DSM 13698 / CCUG 18766 / IAM 14443 / JCM 21226 / LMG 7866 / NBRC 102419 / NCTC 12128 / CDC 0568-73).